Here is a 597-residue protein sequence, read N- to C-terminus: TOX high mobility group box family member 4 (597 aa).

2 disordered regions span residues 160-224 and 520-546; these read GAIL…EPQK and VQEE…SPQP. Positions 207–217 are enriched in basic residues; it reads KPKTPKKKKKK. The Nuclear localization signal signature appears at 212–217; it reads KKKKKK. Positions 222–290 form a DNA-binding region, HMG box; that stretch reads PQKPLSAYAL…EYLKALALYK (69 aa).

As to quaternary structure, component of the PNUTS-PP1 phosphatase complex.

The protein localises to the nucleus. It is found in the chromosome. Its function is as follows. Transcription factor that modulates cell fate reprogramming from the somatic state to the pluripotent and neuronal fate. Also acts as a regulatory component of protein phosphatase 1 (PP1) complexes. Component of the PNUTS-PP1 protein phosphatase complex, a PP1 complex that regulates RNA polymerase II transcription pause-release. PNUTS-PP1 also plays a role in the control of chromatin structure and cell cycle progression during the transition from mitosis into interphase. The protein is TOX high mobility group box family member 4 (tox4) of Xenopus tropicalis (Western clawed frog).